The chain runs to 1720 residues: 6-methylcalicylic acide synthase (1720 aa).

A disordered region spans residues 1–31 (MDKQSASGEIPAMRWEPYHRRDPRNAKELSK). Residues 1–399 (MDKQSASGEI…GTVSHAVIEQ (399 aa)) form the Ketosynthase family 3 (KS3) domain. Positions 16-30 (EPYHRRDPRNAKELS) are enriched in basic and acidic residues. Active-site for beta-ketoacyl synthase activity residues include cysteine 146, histidine 281, and histidine 321. The malonyl-CoA:ACP transacylase (MAT) domain stretch occupies residues 509 to 823 (VWVFSGHGAQ…IAQLHCRGAE (315 aa)). The interval 868-987 (HTLLGQRIGI…AYWARDIQEA (120 aa)) is N-terminal hotdog fold. Positions 868 to 1139 (HTLLGQRIGI…FTAMRFSEIE (272 aa)) are dehydratase (DH) domain. In terms of domain architecture, PKS/mFAS DH spans 868 to 1144 (HTLLGQRIGI…FSEIEGTPGV (277 aa)). Histidine 900 (proton acceptor; for dehydratase activity) is an active-site residue. A C-terminal hotdog fold region spans residues 1001-1144 (GTRIRDDFSI…FSEIEGTPGV (144 aa)). The Proton donor; for dehydratase activity role is filled by aspartate 1065. Residues 1148–1545 (MESLVHQLAW…AVAVQWTSWR (398 aa)) are product template (PT) domain. The Carrier domain occupies 1644–1718 (VYLDEKIRGC…HLVGWFAEKV (75 aa)). The residue at position 1678 (serine 1678) is an O-(pantetheine 4'-phosphoryl)serine.

It localises to the cytoplasm. Its subcellular location is the cytosol. The catalysed reaction is 3 malonyl-CoA + acetyl-CoA + NADPH + 3 H(+) = 6-methylsalicylate + 3 CO2 + NADP(+) + 4 CoA + H2O. It participates in mycotoxin biosynthesis; patulin biosynthesis. Functionally, 6-methylsalicylic acid synthase; part of the gene cluster that mediates the biosynthesis of patulin, an acetate-derived tetraketide mycotoxin produced by several fungal species that shows antimicrobial properties against several bacteria. PatK catalyzes the first step of the pathway which is the synthesis of 6-methylsalicylic acid via condensation of 1 acetate and 3 malonate units. The pathway begins with the synthesis of 6-methylsalicylic acid by the polyketide synthase (PKS) patK via condensation of acetate and malonate units. The 6-methylsalicylic acid decarboxylase patG then catalyzes the decarboxylation of 6-methylsalicylic acid to yield m-cresol (also known as 3-methylphenol). These first reactions occur in the cytosol. The intermediate m-cresol is then transported into the endoplasmic reticulum where the cytochrome P450 monooxygenase patH converts it to m-hydroxybenzyl alcohol, which is further converted to gentisyl alcohol by the cytochrome P450 monooxygenase patI. The oxidoreductases patJ and patO further convert gentisyl alcohol to isoepoxydon in the vacuole. PatN catalyzes then the transformation of isoepoxydon into phyllostine. The cluster protein patF is responsible for the conversion from phyllostine to neopatulin whereas the alcohol dehydrogenase patD converts neopatulin to E-ascladiol. The steps between isoepoxydon and E-ascladiol occur in the cytosol, and E-ascladiol is probably secreted to the extracellular space by one of the cluster-specific transporters patC or patM. Finally, the secreted patulin synthase patE catalyzes the conversion of E-ascladiol to patulin. This Aspergillus clavatus (strain ATCC 1007 / CBS 513.65 / DSM 816 / NCTC 3887 / NRRL 1 / QM 1276 / 107) protein is 6-methylcalicylic acide synthase.